The primary structure comprises 703 residues: Zinc finger CCCH domain-containing protein 36 (703 aa).

4 disordered regions span residues 1–42 (MAGG…DPNG), 112–176 (LQLH…MKNK), 204–242 (VSGS…AGSS), and 442–481 (HGTL…SSSQ). A compositionally biased stretch (low complexity) spans 9–25 (GLPAAGEAAKAGRVGVG). A compositionally biased stretch (basic and acidic residues) spans 112–125 (LQLHGDEKYQKKAG). The segment covering 149-169 (VSQSPPDSNALSSQRFGSSSP) has biased composition (polar residues). The segment at 176–203 (KTRKRTCTFYAQGRCKNGKSCTFLHEGE) adopts a C3H1-type zinc-finger fold. Basic and acidic residues predominate over residues 451-468 (TPDKDASHHKGADFDKGG). Positions 470-481 (SRSTLHVSSSSQ) are enriched in low complexity.

The sequence is that of Zinc finger CCCH domain-containing protein 36 from Oryza sativa subsp. japonica (Rice).